The following is a 417-amino-acid chain: Gamma-glutamyl phosphate reductase (417 aa).

The protein belongs to the gamma-glutamyl phosphate reductase family.

The protein localises to the cytoplasm. It carries out the reaction L-glutamate 5-semialdehyde + phosphate + NADP(+) = L-glutamyl 5-phosphate + NADPH + H(+). It functions in the pathway amino-acid biosynthesis; L-proline biosynthesis; L-glutamate 5-semialdehyde from L-glutamate: step 2/2. Catalyzes the NADPH-dependent reduction of L-glutamate 5-phosphate into L-glutamate 5-semialdehyde and phosphate. The product spontaneously undergoes cyclization to form 1-pyrroline-5-carboxylate. In Streptococcus agalactiae serotype III (strain NEM316), this protein is Gamma-glutamyl phosphate reductase.